Reading from the N-terminus, the 132-residue chain is UPF0060 membrane protein SG1469 (132 aa).

3 helical membrane passes run 5–25 (VLLY…PYCY), 32–52 (LLLI…VLYP), and 60–80 (AAYG…IDGI).

This sequence belongs to the UPF0060 family.

It localises to the cell inner membrane. In Sodalis glossinidius (strain morsitans), this protein is UPF0060 membrane protein SG1469.